The sequence spans 309 residues: Elongation factor Ts (309 aa).

The involved in Mg(2+) ion dislocation from EF-Tu stretch occupies residues 82-85 (TDFV).

It belongs to the EF-Ts family.

It localises to the cytoplasm. Its function is as follows. Associates with the EF-Tu.GDP complex and induces the exchange of GDP to GTP. It remains bound to the aminoacyl-tRNA.EF-Tu.GTP complex up to the GTP hydrolysis stage on the ribosome. This is Elongation factor Ts from Rickettsia typhi (strain ATCC VR-144 / Wilmington).